A 238-amino-acid polypeptide reads, in one-letter code: Pyridoxine 5'-phosphate synthase (238 aa).

Asparagine 9 contributes to the 3-amino-2-oxopropyl phosphate binding site. Aspartate 11–histidine 12 serves as a coordination point for 1-deoxy-D-xylulose 5-phosphate. Arginine 20 is a binding site for 3-amino-2-oxopropyl phosphate. Histidine 45 (proton acceptor) is an active-site residue. 1-deoxy-D-xylulose 5-phosphate contacts are provided by arginine 47 and histidine 52. Glutamate 72 serves as the catalytic Proton acceptor. Threonine 102 lines the 1-deoxy-D-xylulose 5-phosphate pocket. The active-site Proton donor is the histidine 189. 3-amino-2-oxopropyl phosphate-binding positions include glycine 190 and glycine 211–histidine 212.

The protein belongs to the PNP synthase family. As to quaternary structure, homooctamer; tetramer of dimers.

Its subcellular location is the cytoplasm. It catalyses the reaction 3-amino-2-oxopropyl phosphate + 1-deoxy-D-xylulose 5-phosphate = pyridoxine 5'-phosphate + phosphate + 2 H2O + H(+). Its pathway is cofactor biosynthesis; pyridoxine 5'-phosphate biosynthesis; pyridoxine 5'-phosphate from D-erythrose 4-phosphate: step 5/5. Its function is as follows. Catalyzes the complicated ring closure reaction between the two acyclic compounds 1-deoxy-D-xylulose-5-phosphate (DXP) and 3-amino-2-oxopropyl phosphate (1-amino-acetone-3-phosphate or AAP) to form pyridoxine 5'-phosphate (PNP) and inorganic phosphate. This Ehrlichia ruminantium (strain Welgevonden) protein is Pyridoxine 5'-phosphate synthase.